The chain runs to 142 residues: 3-hydroxyacyl-[acyl-carrier-protein] dehydratase FabZ (142 aa).

The active site involves His-46.

This sequence belongs to the thioester dehydratase family. FabZ subfamily.

It localises to the cytoplasm. The catalysed reaction is a (3R)-hydroxyacyl-[ACP] = a (2E)-enoyl-[ACP] + H2O. In terms of biological role, involved in unsaturated fatty acids biosynthesis. Catalyzes the dehydration of short chain beta-hydroxyacyl-ACPs and long chain saturated and unsaturated beta-hydroxyacyl-ACPs. The chain is 3-hydroxyacyl-[acyl-carrier-protein] dehydratase FabZ from Thermus thermophilus (strain ATCC BAA-163 / DSM 7039 / HB27).